Here is a 201-residue protein sequence, read N- to C-terminus: Recombination protein RecR (201 aa).

The C4-type zinc-finger motif lies at 60 to 75; the sequence is CSVCGNVDTIDPCSIC. A Toprim domain is found at 83–178; sequence ATIIVVEDIA…KVTRLAHGVP (96 aa).

The protein belongs to the RecR family.

Functionally, may play a role in DNA repair. It seems to be involved in an RecBC-independent recombinational process of DNA repair. It may act with RecF and RecO. The sequence is that of Recombination protein RecR from Bartonella henselae (strain ATCC 49882 / DSM 28221 / CCUG 30454 / Houston 1) (Rochalimaea henselae).